The primary structure comprises 547 residues: MDSLTLYVTNTMMKRWFQFFKHKAYDFRWAILSGILVGTSYIPFPPWALIFCYTPLWIYVTEESSSVKKSFWAGWVTQFILTLIGFHWIAYTAHEFGQLPWAVSYLALLLFCAFMHLYIPVAVAAGTWLRLRFKLSGGQTLFTIALLHALLERTWPVIFEWHLGYTLIWSKIPMYHLADLVGFHGLSAVVLLFNAWMGYVWLKQSFVKKALSHLSLLALTFAALVGWGFWHGKAWNKFDGETKATVVQANIGNLEKIYAEQGRAYQEVITRKFLDLSFAAMQKYPQTDILIWPETAFPDYLDQHLLDRKHAQILISGLQPLSRPLITGAYSKDPKADEKQDTSTYNALFLVDPLGNNLDKPYRKTELLAFGEYLPLSEQFPFLLKLLPFVSNFGRGHGPEVMKWDTPQGSVRWGGQICYEGLYPSFTRGLAEKGADILVNVTNDSWFGKTFEPQQHLYMTLARAIEVRRPLVRSTNTGVSTAVLANGDVLQKSPLHEEWSGQFVIKYLKNAPLTFFVQWGHWDWIVILLVLGAVIGRGALNARSRRS.

5 consecutive transmembrane segments (helical) span residues 31-51 (ILSG…ALIF), 71-91 (FWAG…WIAY), 106-126 (LALL…VAAG), 180-200 (LVGF…MGYV), and 210-230 (ALSH…WGFW). Residues 247–515 (VQANIGNLEK…KYLKNAPLTF (269 aa)) form the CN hydrolase domain. The Proton acceptor role is filled by glutamate 294. The active site involves lysine 364. Cysteine 418 acts as the Nucleophile in catalysis. A helical membrane pass occupies residues 515–535 (FFVQWGHWDWIVILLVLGAVI).

This sequence belongs to the CN hydrolase family. Apolipoprotein N-acyltransferase subfamily.

The protein resides in the cell inner membrane. The catalysed reaction is N-terminal S-1,2-diacyl-sn-glyceryl-L-cysteinyl-[lipoprotein] + a glycerophospholipid = N-acyl-S-1,2-diacyl-sn-glyceryl-L-cysteinyl-[lipoprotein] + a 2-acyl-sn-glycero-3-phospholipid + H(+). Its pathway is protein modification; lipoprotein biosynthesis (N-acyl transfer). In terms of biological role, catalyzes the phospholipid dependent N-acylation of the N-terminal cysteine of apolipoprotein, the last step in lipoprotein maturation. This chain is Apolipoprotein N-acyltransferase, found in Bdellovibrio bacteriovorus (strain ATCC 15356 / DSM 50701 / NCIMB 9529 / HD100).